The following is a 707-amino-acid chain: Matrix metalloproteinase-9 (707 aa).

An N-terminal signal peptide occupies residues 1-19 (MSPRQPLVLALLVLGCCSA). A propeptide spans 20-106 (APRRRQPTLV…PRCGVPDVGK (87 aa)) (activation peptide). An N-linked (GlcNAc...) asparagine glycan is attached at N88. Positions 97 to 104 (PRCGVPDV) match the Cysteine switch motif. Residue C99 coordinates Zn(2+). 2 N-linked (GlcNAc...) asparagine glycosylation sites follow: N120 and N127. Residues D131 and D165 each contribute to the Ca(2+) site. H175 and D177 together coordinate Zn(2+). Residues D182, G183, D185, and L187 each coordinate Ca(2+). H190 is a Zn(2+) binding site. G197, Q199, and D201 together coordinate Ca(2+). H203 contacts Zn(2+). Ca(2+)-binding residues include D205, D206, and E208. Fibronectin type-II domains lie at 225 to 273 (ADGA…FCPS), 283 to 331 (ADGK…FCPT), and 342 to 390 (SAGE…FCPD). 6 disulfide bridges follow: C230-C256, C244-C271, C288-C314, C302-C329, C347-C373, and C361-C388. H401 provides a ligand contact to Zn(2+). E402 is a catalytic residue. Zn(2+)-binding residues include H405 and H411. The interval 437 to 508 (RGIQHLYGPN…ASPSAAPTAS (72 aa)) is disordered. Positions 446–467 (NPNPQPPATTTPEPQPTAPPTA) are enriched in pro residues. The segment covering 481–493 (PTTSPTGAPSAGP) has biased composition (low complexity). An intrachain disulfide couples C516 to C704. Hemopexin repeat units lie at residues 518 to 563 (VNVF…WPAL), 564 to 608 (PAKL…GLGP), 610 to 657 (VPHV…FPGV), and 658 to 704 (PLNT…ILHC).

Belongs to the peptidase M10A family. As to quaternary structure, exists as monomer or homodimer; disulfide-linked. Also exists as heterodimer with LCN2. Macrophages and transformed cell lines produce only the monomeric form. Interacts with ECM1. Zn(2+) is required as a cofactor. It depends on Ca(2+) as a cofactor. Post-translationally, N- and O-glycosylated. In terms of tissue distribution, osteoclasts.

The protein localises to the secreted. It localises to the extracellular space. Its subcellular location is the extracellular matrix. It carries out the reaction Cleavage of gelatin types I and V and collagen types IV and V.. Functionally, matrix metalloproteinase that plays an essential role in local proteolysis of the extracellular matrix and in leukocyte migration. Could play a role in bone osteoclastic resorption. Cleaves KiSS1 at a Gly-|-Leu bond. Cleaves NINJ1 to generate the Secreted ninjurin-1 form. Cleaves type IV and type V collagen into large C-terminal three quarter fragments and shorter N-terminal one quarter fragments. Degrades fibronectin but not laminin or Pz-peptide. The protein is Matrix metalloproteinase-9 of Oryctolagus cuniculus (Rabbit).